A 355-amino-acid polypeptide reads, in one-letter code: Syntaxin-5 (355 aa).

The Cytoplasmic segment spans residues 1-333 (MIPRKRYGSK…KYFQSVTSNR (333 aa)). The IxM motif; signal for cargo packaging into COPII-coated vesicles motif lies at 245–247 (IDM). Residues 263-325 (DSYIQSRADT…EAAHSEILKY (63 aa)) enclose the t-SNARE coiled-coil homology domain. Residues 287 to 318 (FQQLAHMVKEQEETIQRIDENVLGAQLDVEAA) are a coiled coil. Residues 334–354 (WLMVKIFLILIVFFIIFVVFL) form a helical; Anchor for type IV membrane protein membrane-spanning segment. Residue alanine 355 is a topological domain, vesicular.

The protein belongs to the syntaxin family. Part of a ternary complex containing STX5A, NSFL1C and VCP. Part of a unique SNARE complex composed of the Golgi SNAREs GOSR1, GOSR2 and YKT6. This complex also includes VTI1A. Component of a SNARE complex consisting of STX5, YKT6, GOSR1 and BET1L. Interacts with BET1L. Interacts with BET1. Interacts with COG4. Interacts with GM130/GOLGA2. Interacts (via IxM motif) with SEC24C and SEC24D; mediates STX5 packaging into COPII-coated vesicles. Interacts with VLDLR; this interaction mediates VLDLR translocation from the endoplasmic reticulum to the plasma membrane. As to expression, expressed in the brain, heart, spleen, lung, liver, kidney and testis.

The protein resides in the endoplasmic reticulum-Golgi intermediate compartment membrane. It is found in the golgi apparatus membrane. Its function is as follows. Mediates endoplasmic reticulum to Golgi transport. Together with p115/USO1 and GM130/GOLGA2, involved in vesicle tethering and fusion at the cis-Golgi membrane to maintain the stacked and inter-connected structure of the Golgi apparatus. In terms of biological role, required for Golgi to endoplasmic reticulum retrogade transport, and for intra-Golgi transport. In Rattus norvegicus (Rat), this protein is Syntaxin-5 (Stx5).